We begin with the raw amino-acid sequence, 93 residues long: NADH-dependent phenylglyoxylate dehydrogenase subunit delta (93 aa).

4Fe-4S ferredoxin-type domains are found at residues 39–68 (MRPV…EHAA) and 66–93 (HAAW…RRSR).

Dimer of heteropentamers composed of an alpha (PadG), a beta (PadI), a gamma (PadE), a delta (PadF) and an epsilon (PadH) subunit. [4Fe-4S] cluster is required as a cofactor.

It carries out the reaction phenylglyoxylate + NAD(+) + CoA = benzoyl-CoA + CO2 + NADH. Activated by magnesium ions and thiamine diphosphate. Its function is as follows. Involved in the anaerobic metabolism of phenylalanine and phenylacetate. Catalyzes the oxidative decarboxylation of phenylglyoxylate to benzoyl-CoA and CO(2). It can also react slowly with 2-oxo-3-methylbutanoate and use different electron acceptors such as benzyl viologen, methyl viologen, FAD or FMN, but NAD seems to be the physiological electron acceptor. Also catalyzes an isotope exchange between CO(2) and the carboxyl group which proves partial or complete reversibility of the oxidative decarboxylation reaction. The polypeptide is NADH-dependent phenylglyoxylate dehydrogenase subunit delta (padF) (Aromatoleum evansii (Azoarcus evansii)).